We begin with the raw amino-acid sequence, 197 residues long: Phosphoheptose isomerase (197 aa).

An SIS domain is found at 36–197 (LVHSLAQGGK…VDSLLLGVEE (162 aa)). Residue 51–53 (NGG) coordinates substrate. 2 residues coordinate Zn(2+): His60 and Glu64. Residues Glu64, 93 to 94 (ND), 119 to 121 (STS), Ser124, and Gln174 each bind substrate. Positions 174 and 182 each coordinate Zn(2+).

Belongs to the SIS family. GmhA subfamily. In terms of assembly, homotetramer. It depends on Zn(2+) as a cofactor.

Its subcellular location is the cytoplasm. The catalysed reaction is 2 D-sedoheptulose 7-phosphate = D-glycero-alpha-D-manno-heptose 7-phosphate + D-glycero-beta-D-manno-heptose 7-phosphate. Its pathway is carbohydrate biosynthesis; D-glycero-D-manno-heptose 7-phosphate biosynthesis; D-glycero-alpha-D-manno-heptose 7-phosphate and D-glycero-beta-D-manno-heptose 7-phosphate from sedoheptulose 7-phosphate: step 1/1. Functionally, catalyzes the isomerization of sedoheptulose 7-phosphate in D-glycero-D-manno-heptose 7-phosphate. The protein is Phosphoheptose isomerase of Thiobacillus denitrificans (strain ATCC 25259 / T1).